Reading from the N-terminus, the 383-residue chain is tRNA-specific 2-thiouridylase MnmA (383 aa).

ATP contacts are provided by residues 16 to 23 (AMSGGVDS) and Leu42. Cys110 functions as the Nucleophile in the catalytic mechanism. Cys110 and Cys209 form a disulfide bridge. ATP is bound at residue Gly134. The interaction with tRNA stretch occupies residues 159-161 (KDQ). The active-site Cysteine persulfide intermediate is Cys209.

This sequence belongs to the MnmA/TRMU family.

The protein resides in the cytoplasm. It catalyses the reaction S-sulfanyl-L-cysteinyl-[protein] + uridine(34) in tRNA + AH2 + ATP = 2-thiouridine(34) in tRNA + L-cysteinyl-[protein] + A + AMP + diphosphate + H(+). Its function is as follows. Catalyzes the 2-thiolation of uridine at the wobble position (U34) of tRNA, leading to the formation of s(2)U34. In Caulobacter vibrioides (strain ATCC 19089 / CIP 103742 / CB 15) (Caulobacter crescentus), this protein is tRNA-specific 2-thiouridylase MnmA.